Here is a 147-residue protein sequence, read N- to C-terminus: Ribonuclease P protein component 2 (147 aa).

It belongs to the eukaryotic/archaeal RNase P protein component 2 family. As to quaternary structure, consists of a catalytic RNA component and at least 4-5 protein subunits.

It is found in the cytoplasm. It catalyses the reaction Endonucleolytic cleavage of RNA, removing 5'-extranucleotides from tRNA precursor.. Its function is as follows. Part of ribonuclease P, a protein complex that generates mature tRNA molecules by cleaving their 5'-ends. This is Ribonuclease P protein component 2 from Methanocorpusculum labreanum (strain ATCC 43576 / DSM 4855 / Z).